A 155-amino-acid polypeptide reads, in one-letter code: Small ribosomal subunit protein uS7cz/uS7cy (155 aa).

Belongs to the universal ribosomal protein uS7 family. In terms of assembly, part of the 30S ribosomal subunit.

Its subcellular location is the plastid. It is found in the chloroplast. Its function is as follows. One of the primary rRNA binding proteins, it binds directly to 16S rRNA where it nucleates assembly of the head domain of the 30S subunit. This is Small ribosomal subunit protein uS7cz/uS7cy (rps7-A) from Lactuca sativa (Garden lettuce).